Here is a 490-residue protein sequence, read N- to C-terminus: Transcription factor lin-26 (490 aa).

Disordered regions lie at residues 96 to 176 (KYKD…PLHQ), 236 to 262 (TPEY…EPDS), and 302 to 326 (ASKP…KKHR). Residues 101–110 (SSSPESPSTT) are PEST. Residues 101–120 (SSSPESPSTTASTAAQHTPP) are compositionally biased toward low complexity. 2 stretches are compositionally biased toward polar residues: residues 123–132 (AVSTPTSINT) and 151–176 (NLST…PLHQ). Over residues 236–260 (TPEYDDNHHSETISKASSEDLKTEP) the composition is skewed to basic and acidic residues. The C2H2-type; degenerate zinc finger occupies 353-381 (YKCALCGKPTTLNSTGSRWNLLRHVIMIH).

As to expression, expressed in somatic gonads and germline precursors until the 50-cell stage. After the 100-cell stage, expression is seen in differentiating hypodermal and support cells (at protein level).

It localises to the nucleus. Its function is as follows. Probable transcription factor. Required to specify the fates of hypodermal and neuron-associated support cells. Functions during vulval development, playing a role in vulval precursor cell fate specification. Positively modulates expression of homeobox protein lin-39, perhaps by binding to regulatory regions of the lin-39 gene, acting in the vulval lineage. In Caenorhabditis elegans, this protein is Transcription factor lin-26.